Here is a 446-residue protein sequence, read N- to C-terminus: Tripartite motif-containing protein 43B (446 aa).

Residues 15–56 (CVICLNYLVDPVTICCGHSFCRPCLCLSWEEAQSPANCPACR) form an RING-type zinc finger. The B box-type zinc-finger motif lies at 88–129 (SEKQICGTHRQTKKMFCDMDKSLLCLLCSNSQEHGAHKHYPI). 4 residues coordinate Zn(2+): Cys-93, His-96, Cys-115, and His-121. Coiled coils occupy residues 129–158 (IEEA…QRNL) and 190–220 (LHKE…VKMD). The B30.2/SPRY domain maps to 269–446 (ELTAGPITGL…VRPFFYTGHR (178 aa)).

This sequence belongs to the TRIM/RBCC family.

The protein is Tripartite motif-containing protein 43B (TRIM43B) of Homo sapiens (Human).